The chain runs to 284 residues: tRNA-cytidine(32) 2-sulfurtransferase (284 aa).

Polar residues predominate over residues Met1 to Ala11. Residues Met1 to Pro20 are disordered. Residues Ser63–Ser68 carry the PP-loop motif motif. [4Fe-4S] cluster is bound by residues Cys138, Cys141, and Cys229.

This sequence belongs to the TtcA family. In terms of assembly, homodimer. It depends on Mg(2+) as a cofactor. [4Fe-4S] cluster serves as cofactor.

The protein resides in the cytoplasm. It carries out the reaction cytidine(32) in tRNA + S-sulfanyl-L-cysteinyl-[cysteine desulfurase] + AH2 + ATP = 2-thiocytidine(32) in tRNA + L-cysteinyl-[cysteine desulfurase] + A + AMP + diphosphate + H(+). It participates in tRNA modification. Functionally, catalyzes the ATP-dependent 2-thiolation of cytidine in position 32 of tRNA, to form 2-thiocytidine (s(2)C32). The sulfur atoms are provided by the cysteine/cysteine desulfurase (IscS) system. The sequence is that of tRNA-cytidine(32) 2-sulfurtransferase from Chelativorans sp. (strain BNC1).